Here is a 449-residue protein sequence, read N- to C-terminus: Trigger factor (449 aa).

Residues 162 to 247 (GDTVTIDYTG…IHEVKSKELP (86 aa)) form the PPIase FKBP-type domain. The span at 427-438 (AKKATKKSTAKK) shows a compositional bias: basic residues. Residues 427–449 (AKKATKKSTAKKSTKEDEKKADK) form a disordered region. Residues 439–449 (STKEDEKKADK) are compositionally biased toward basic and acidic residues.

This sequence belongs to the FKBP-type PPIase family. Tig subfamily.

It localises to the cytoplasm. The enzyme catalyses [protein]-peptidylproline (omega=180) = [protein]-peptidylproline (omega=0). Functionally, involved in protein export. Acts as a chaperone by maintaining the newly synthesized protein in an open conformation. Functions as a peptidyl-prolyl cis-trans isomerase. This chain is Trigger factor, found in Lactobacillus gasseri (strain ATCC 33323 / DSM 20243 / BCRC 14619 / CIP 102991 / JCM 1131 / KCTC 3163 / NCIMB 11718 / NCTC 13722 / AM63).